The primary structure comprises 110 residues: Large ribosomal subunit protein eL34 (110 aa).

The segment at 1–41 (MKNVLIHKGATYKTRSNRRRKVRTPSGKLVNRRVKKHSKKH) is disordered. Basic residues predominate over residues 30 to 41 (VNRRVKKHSKKH).

This sequence belongs to the eukaryotic ribosomal protein eL34 family.

This Encephalitozoon cuniculi (strain GB-M1) (Microsporidian parasite) protein is Large ribosomal subunit protein eL34 (RPL34).